The primary structure comprises 191 residues: MKQLFLIIGAPGSGKTTDAELIAKNNSEKIAHFSTGDLLRAESAKKTERGLLIEKFTSQGELVPLEIVVETILSAIKSSDKGIILIDGYPRSVEQMQALDKELSAQNEVVLKSVIEVEVSENTAKERVLGRSRGADDNEMVFHNRMRVFLDPLGEIQNFYKNKKVYKAINGERSIEEIVHEMQEYILSFGN.

12–17 contacts ATP; that stretch reads GSGKTT. The interval 34 to 63 is NMP; sequence STGDLLRAESAKKTERGLLIEKFTSQGELV. AMP contacts are provided by residues T35, R40, 61-63, 88-91, and Q95; these read ELV and GYPR. The interval 130-136 is LID; sequence GRSRGAD. R131 provides a ligand contact to ATP. Residues R133 and R145 each coordinate AMP. R173 contacts ATP.

It belongs to the adenylate kinase family. In terms of assembly, monomer.

The protein localises to the cytoplasm. It carries out the reaction AMP + ATP = 2 ADP. It functions in the pathway purine metabolism; AMP biosynthesis via salvage pathway; AMP from ADP: step 1/1. Its function is as follows. Catalyzes the reversible transfer of the terminal phosphate group between ATP and AMP. Plays an important role in cellular energy homeostasis and in adenine nucleotide metabolism. The protein is Adenylate kinase of Helicobacter pylori (strain Shi470).